Reading from the N-terminus, the 100-residue chain is RxLR effector protein SFI8 (100 aa).

A signal peptide spans 1-22; it reads MRSILYAVLAFAVLARSSAVAA. The RxLR-dEER signature appears at 43-57; it reads RSLRVEAQEVIQSGR. Residues 78-82 carry the Calmodulin-binding motif motif; the sequence is KPDIK.

The protein belongs to the RxLR effector family. Interacts with the host calmodulin.

The protein resides in the secreted. It localises to the host nucleus. The protein localises to the host cytoplasm. Functionally, effector that suppresses flg22-induced post-translational MAP kinase activation both tomato and Arabidopsis. The perception of highly conserved pathogen- or microbe-associated molecular patterns (PAMPs/MAMPs), such as flg22, triggers converging signaling pathways recruiting MAP kinase cascades and inducing transcriptional re-programming, yielding a generic antimicrobial response. Associates with calmodulin to interfere with plant defense-associated calcium signaling in hosts. The chain is RxLR effector protein SFI8 from Phytophthora infestans (strain T30-4) (Potato late blight agent).